Reading from the N-terminus, the 476-residue chain is ATP synthase subunit beta, mitochondrial (476 aa).

156 to 163 (GAGVGKTV) lines the ATP pocket.

As to quaternary structure, F-type ATP synthases have 2 components, the catalytic core F(1) and the membrane-embedded component F(0), linked together by a central stalk and a peripheral stalk. The central stalk, also called rotor shaft, is often seen as part of F(1). The peripheral stalk is seen as part of F(0). F(0) contains the membrane channel next to the rotor. F-type ATP synthases form dimers but each monomer functions independently in ATP generation. The dimer consists of 18 different polypeptides: ATP1 (subunit alpha, part of F(1), 3 molecules per monomer), ATP2 (subunit beta, part of F(1), 3 molecules per monomer), ATP3 (subunit gamma, part of the central stalk), ATP4 (subunit b, part of the peripheral stalk), ATP5/OSCP (subunit 5/OSCP, part of the peripheral stalk), ATP6 (subunit a, part of the peripheral stalk), ATP7 (subunit d, part of the peripheral stalk), ATP8 (subunit 8, part of the peripheral stalk), OLI1 (subunit c, part of the rotor, 10 molecules per monomer), ATP14 (subunit h, part of the peripheral stalk), ATP15 (subunit epsilon, part of the central stalk), ATP16 (subunit delta, part of the central stalk), ATP17 (subunit f, part of the peripheral stalk), ATP18 (subunit i/j, part of the peripheral stalk). Dimer-specific subunits are ATP19 (subunit k, at interface between monomers), ATP20 (subunit g, at interface between monomers), TIM11 (subunit e, at interface between monomers). Also contains subunit L.

The protein resides in the mitochondrion inner membrane. The enzyme catalyses ATP + H2O + 4 H(+)(in) = ADP + phosphate + 5 H(+)(out). Its function is as follows. Mitochondrial membrane ATP synthase (F(1)F(0) ATP synthase or Complex V) produces ATP from ADP in the presence of a proton gradient across the membrane which is generated by electron transport complexes of the respiratory chain. F-type ATP synthases consist of two structural domains, F(1) - containing the extramembraneous catalytic core, and F(0) - containing the membrane proton channel, linked together by a central stalk and a peripheral stalk. During catalysis, ATP synthesis in the catalytic domain of F(1) is coupled via a rotary mechanism of the central stalk subunits to proton translocation. Subunits alpha/ATP1 and beta/ATP2 form the catalytic core in F(1). Rotation of the central stalk against the surrounding alpha/ATP1(3)beta/ATP2(3) subunits leads to hydrolysis of ATP in three separate catalytic sites on the beta/ATP2 subunits. The protein is ATP synthase subunit beta, mitochondrial of Pichia angusta (Yeast).